The sequence spans 287 residues: 1-acyl-sn-glycerol-3-phosphate acyltransferase alpha (287 aa).

The signal sequence occupies residues 1–26 (MELWPGAGTLLLLLFLLLLLLLPTLW). Residues 27–37 (FCSPSAKYFFK) lie on the Lumenal side of the membrane. A helical transmembrane segment spans residues 38-58 (MAFYNGWILFLAVLAIPVCAV). Over 59–127 (RGRNVENMKI…PGHCVPIAKR (69 aa)) the chain is Cytoplasmic. Positions 104-109 (HQSSLD) match the HXXXXD motif motif. Residues 128-148 (ELLWAGSAGLACWLAGVIFID) traverse the membrane as a helical segment. Over 149–192 (RKRTGDAISVMSEVAQTLLTQDVRVWVFPEGTRNHNGSMLPFKR) the chain is Lumenal. Residues 178–181 (EGTR) carry the EGTR motif motif.

The protein belongs to the 1-acyl-sn-glycerol-3-phosphate acyltransferase family.

It localises to the endoplasmic reticulum membrane. The catalysed reaction is a 1-acyl-sn-glycero-3-phosphate + an acyl-CoA = a 1,2-diacyl-sn-glycero-3-phosphate + CoA. The enzyme catalyses 1-(9Z-octadecenoyl)-sn-glycero-3-phosphate + (9Z)-octadecenoyl-CoA = 1,2-di-(9Z-octadecenoyl)-sn-glycero-3-phosphate + CoA. It catalyses the reaction 1-(9Z-octadecenoyl)-sn-glycero-3-phosphate + hexadecanoyl-CoA = 1-(9Z)-octadecenoyl-2-hexadecanoyl-sn-glycero-3-phosphate + CoA. It carries out the reaction heptadecanoyl-CoA + 1-(9Z-octadecenoyl)-sn-glycero-3-phosphate = 1-(9Z)-octadecenoyl-2-heptadecanoyl-sn-glycero-3-phosphate + CoA. The catalysed reaction is 1-(9Z-octadecenoyl)-sn-glycero-3-phosphate + octadecanoyl-CoA = 1-(9Z-octadecenoyl)-2-octadecanoyl-sn-glycero-3-phosphate + CoA. The enzyme catalyses 1-(9Z-octadecenoyl)-sn-glycero-3-phosphate + (9Z,12Z)-octadecadienoyl-CoA = 1-(9Z)-octadecenoyl-2-(9Z,12Z)-octadecadienoyl-sn-glycero-3-phosphate + CoA. It catalyses the reaction 1-(9Z-octadecenoyl)-sn-glycero-3-phosphate + tetradecanoyl-CoA = 1-(9Z)-octadecenoyl-2-tetradecanoyl-sn-glycero-3-phosphate + CoA. It carries out the reaction pentadecanoyl-CoA + 1-(9Z-octadecenoyl)-sn-glycero-3-phosphate = 1-(9Z)-octadecenoyl-2-pentadecanoyl-sn-glycero-3-phosphate + CoA. The catalysed reaction is 1-hexadecanoyl-sn-glycero-3-phosphate + (9Z)-octadecenoyl-CoA = 1-hexadecanoyl-2-(9Z-octadecenoyl)-sn-glycero-3-phosphate + CoA. The enzyme catalyses 1-(9Z,12Z,15Z)-octadecatrienoyl-sn-glycero-3-phosphate + (9Z)-octadecenoyl-CoA = 1-(9Z,12Z,15Z)-octadecatrienoyl-2-(9Z)-octadecenoyl-sn-glycero-3-phosphate + CoA. It catalyses the reaction 1-(6Z,9Z,12Z-octadecatrienoyl)-sn-glycero-3-phosphate + (9Z)-octadecenoyl-CoA = (6Z,9Z,12Z)-octadecatrienoyl-2-(9Z)-octadecenoyl-sn-glycero-3-phosphate + CoA. It carries out the reaction 1-eicosanoyl-sn-glycero-3-phosphate + (9Z)-octadecenoyl-CoA = 1-eicosanoyl-2-(9Z)-octadecenoyl-sn-glycero-3-phosphate + CoA. The catalysed reaction is 1-tetradecanoyl-sn-glycerol 3-phosphate + (9Z)-octadecenoyl-CoA = 1-tetradecanoyl-2-(9Z)-octadecenoyl-sn-glycero-3-phosphate + CoA. The enzyme catalyses 1-(9Z-octadecenoyl)-sn-glycero-3-phosphate + (5Z,8Z,11Z,14Z)-eicosatetraenoyl-CoA = 1-(9Z)-octadecenoyl-2-(5Z,8Z,11Z,14Z)-eicosatetraenoyl-sn-glycero-3-phosphate + CoA. It catalyses the reaction 1-(9Z-octadecenoyl)-sn-glycero-3-phosphate + dodecanoyl-CoA = 1-(9Z)-octadecenoyl-2-dodecanoyl-sn-glycero-3-phosphate + CoA. It carries out the reaction (6Z)-octadecenoyl-CoA + 1-(9Z-octadecenoyl)-sn-glycero-3-phosphate = 1-(9Z)-octadecenoyl-2-(6Z)-octadecenoyl-sn-glycero-3-phosphate + CoA. The catalysed reaction is (11Z)-octadecenoyl-CoA + 1-(9Z-octadecenoyl)-sn-glycero-3-phosphate = 1-(9Z)-octadecenoyl-2-(11Z)-octadecenoyl-sn-glycero-3-phosphate + CoA. The enzyme catalyses (9Z)-hexadecenoyl-CoA + 1-(9Z-octadecenoyl)-sn-glycero-3-phosphate = 1-(9Z-octadecenoyl)-2-(9Z-hexadecenoyl)-sn-glycero-3-phosphate + CoA. The protein operates within phospholipid metabolism; CDP-diacylglycerol biosynthesis; CDP-diacylglycerol from sn-glycerol 3-phosphate: step 2/3. In terms of biological role, converts 1-acyl-sn-glycerol-3-phosphate (lysophosphatidic acid or LPA) into 1,2-diacyl-sn-glycerol-3-phosphate (phosphatidic acid or PA) by incorporating an acyl moiety at the sn-2 position of the glycerol backbone. The sequence is that of 1-acyl-sn-glycerol-3-phosphate acyltransferase alpha (AGPAT1) from Ovis aries (Sheep).